The primary structure comprises 119 residues: uncharacterized protein (119 aa).

Positions 64–119 are disordered; the sequence is SAPLGLKEVQKKSNEGLNEVQGAADINKQKRPANSQDSSSVEGDIQNFLEKVTGKN. The span at 95-104 shows a compositional bias: polar residues; sequence PANSQDSSSV.

This is an uncharacterized protein from Nostoc sp. (strain PCC 7120 / SAG 25.82 / UTEX 2576).